The primary structure comprises 153 residues: Histone H2B.3 (153 aa).

Composition is skewed to basic and acidic residues over residues 1–10 and 20–54; these read MAPKKDEKPA and AKAE…GEKK. The segment at 1–60 is disordered; that stretch reads MAPKKDEKPATAEAGAEAPAKAEAKPKAEKAGKKAKKEPAKKAAKEPKGDGEKKDKKKKK. An N6-acetyllysine mark is found at K41 and K42. K149 is covalently cross-linked (Glycyl lysine isopeptide (Lys-Gly) (interchain with G-Cter in ubiquitin)).

The protein belongs to the histone H2B family. In terms of assembly, the nucleosome is a histone octamer containing two molecules each of H2A, H2B, H3 and H4 assembled in one H3-H4 heterotetramer and two H2A-H2B heterodimers. The octamer wraps approximately 147 bp of DNA. Post-translationally, the N-terminus is blocked. In terms of processing, can be acetylated to form H2BK33ac and H2BK34ac. Acetylated mainly on the ubiquitinated form. Monoubiquitinated to form H2BK143ub1; which is increased during the light period and may give a specific tag for epigenetic transcriptional activation.

It is found in the nucleus. The protein resides in the chromosome. Its function is as follows. Core component of nucleosome. Nucleosomes wrap and compact DNA into chromatin, limiting DNA accessibility to the cellular machineries which require DNA as a template. Histones thereby play a central role in transcription regulation, DNA repair, DNA replication and chromosomal stability. DNA accessibility is regulated via a complex set of post-translational modifications of histones, also called histone code, and nucleosome remodeling. The chain is Histone H2B.3 from Chlamydomonas reinhardtii (Chlamydomonas smithii).